Consider the following 737-residue polypeptide: DNA topoisomerase 4 subunit A (737 aa).

The region spanning 32–496 (LPDVRDGLKP…SFEEVTLTNQ (465 aa)) is the Topo IIA-type catalytic domain. The O-(5'-phospho-DNA)-tyrosine intermediate role is filled by Tyr-120.

Belongs to the type II topoisomerase GyrA/ParC subunit family. ParC type 1 subfamily. Heterotetramer composed of ParC and ParE.

It localises to the cell membrane. The catalysed reaction is ATP-dependent breakage, passage and rejoining of double-stranded DNA.. Its function is as follows. Topoisomerase IV is essential for chromosome segregation. It relaxes supercoiled DNA. Performs the decatenation events required during the replication of a circular DNA molecule. The polypeptide is DNA topoisomerase 4 subunit A (Rickettsia felis (strain ATCC VR-1525 / URRWXCal2) (Rickettsia azadi)).